A 477-amino-acid chain; its full sequence is Probable periplasmic serine endoprotease DegP-like (477 aa).

An N-terminal signal peptide occupies residues 1–27 (MSIPRLKSYLTMFAAVLMLGQVLTAQA). Catalysis depends on charge relay system residues His-117, Asp-147, and Ser-220. Substrate contacts are provided by residues 218 to 220 (GNS) and 275 to 279 (LGVVI). 2 PDZ domains span residues 264–355 (LKKD…IRNG) and 361–466 (DISV…LRQG).

It belongs to the peptidase S1C family.

Its subcellular location is the periplasm. It carries out the reaction Acts on substrates that are at least partially unfolded. The cleavage site P1 residue is normally between a pair of hydrophobic residues, such as Val-|-Val.. Its function is as follows. Might be efficient in the degradation of transiently denatured and unfolded proteins which accumulate in the periplasm following stress conditions. The protein is Probable periplasmic serine endoprotease DegP-like of Pseudomonas putida (strain GB-1).